Consider the following 157-residue polypeptide: 2-C-methyl-D-erythritol 2,4-cyclodiphosphate synthase (157 aa).

2 residues coordinate a divalent metal cation: Asp8 and His10. 4-CDP-2-C-methyl-D-erythritol 2-phosphate contacts are provided by residues 8–10 and 35–36; these read DIH and HS. His43 is a binding site for a divalent metal cation. 4-CDP-2-C-methyl-D-erythritol 2-phosphate is bound by residues 57 to 59, 62 to 66, and Lys142; these read DIG and FPNND.

Belongs to the IspF family. As to quaternary structure, homotrimer. The cofactor is a divalent metal cation.

The catalysed reaction is 4-CDP-2-C-methyl-D-erythritol 2-phosphate = 2-C-methyl-D-erythritol 2,4-cyclic diphosphate + CMP. Its pathway is isoprenoid biosynthesis; isopentenyl diphosphate biosynthesis via DXP pathway; isopentenyl diphosphate from 1-deoxy-D-xylulose 5-phosphate: step 4/6. Functionally, involved in the biosynthesis of isopentenyl diphosphate (IPP) and dimethylallyl diphosphate (DMAPP), two major building blocks of isoprenoid compounds. Catalyzes the conversion of 4-diphosphocytidyl-2-C-methyl-D-erythritol 2-phosphate (CDP-ME2P) to 2-C-methyl-D-erythritol 2,4-cyclodiphosphate (ME-CPP) with a corresponding release of cytidine 5-monophosphate (CMP). The sequence is that of 2-C-methyl-D-erythritol 2,4-cyclodiphosphate synthase from Wigglesworthia glossinidia brevipalpis.